The sequence spans 119 residues: Large ribosomal subunit protein bL20c (119 aa).

Belongs to the bacterial ribosomal protein bL20 family.

It is found in the plastid. The protein resides in the chloroplast. Functionally, binds directly to 23S ribosomal RNA and is necessary for the in vitro assembly process of the 50S ribosomal subunit. It is not involved in the protein synthesizing functions of that subunit. This chain is Large ribosomal subunit protein bL20c, found in Saccharum hybrid (Sugarcane).